A 530-amino-acid chain; its full sequence is Tyrosinase (530 aa).

The signal sequence occupies residues 1–18; it reads MLLAALCCLLWSFRTSTG. Residues 19–473 lie on the Lumenal, melanosome side of the membrane; that stretch reads HFPRACASSK…IKPYLEQASR (455 aa). Residues Asn86, Asn111, and Asn161 are each glycosylated (N-linked (GlcNAc...) asparagine). His180, His202, and His211 together coordinate Cu cation. N-linked (GlcNAc...) asparagine glycosylation is found at Asn230 and Asn337. Cu cation-binding residues include His363 and His367. The N-linked (GlcNAc...) asparagine glycan is linked to Asn371. His390 contributes to the Cu cation binding site. Residues 474–494 traverse the membrane as a helical segment; the sequence is IWPWLIGAAVVGCVVTAVLGG. The Cytoplasmic portion of the chain corresponds to 495 to 530; the sequence is LTSLLCRRNRKQLHEEKQPLLMEKEDYHSLLYQTHL.

It belongs to the tyrosinase family. Forms an OPN3-dependent complex with DCT in response to blue light in melanocytes. Cu(2+) serves as cofactor. Glycosylated.

It is found in the melanosome membrane. The protein resides in the melanosome. The enzyme catalyses 2 L-dopa + O2 = 2 L-dopaquinone + 2 H2O. It carries out the reaction L-tyrosine + O2 = L-dopaquinone + H2O. It catalyses the reaction 2 5,6-dihydroxyindole-2-carboxylate + O2 = 2 indole-5,6-quinone-2-carboxylate + 2 H2O. This is a copper-containing oxidase that functions in the formation of pigments such as melanins and other polyphenolic compounds. Catalyzes the initial and rate limiting step in the cascade of reactions leading to melanin production from tyrosine. In addition to hydroxylating tyrosine to DOPA (3,4-dihydroxyphenylalanine), also catalyzes the oxidation of DOPA to DOPA-quinone, and possibly the oxidation of DHI (5,6-dihydroxyindole) to indole-5,6 quinone. The chain is Tyrosinase (TYR) from Canis lupus familiaris (Dog).